A 220-amino-acid chain; its full sequence is Phosphatidylserine decarboxylase proenzyme (220 aa).

The active-site Schiff-base intermediate with substrate; via pyruvic acid is the Ser-188. Ser-188 bears the Pyruvic acid (Ser); by autocatalysis mark.

It belongs to the phosphatidylserine decarboxylase family. PSD-A subfamily. In terms of assembly, heterodimer of a large membrane-associated beta subunit and a small pyruvoyl-containing alpha subunit. Pyruvate is required as a cofactor. Post-translationally, is synthesized initially as an inactive proenzyme. Formation of the active enzyme involves a self-maturation process in which the active site pyruvoyl group is generated from an internal serine residue via an autocatalytic post-translational modification. Two non-identical subunits are generated from the proenzyme in this reaction, and the pyruvate is formed at the N-terminus of the alpha chain, which is derived from the carboxyl end of the proenzyme. The post-translation cleavage follows an unusual pathway, termed non-hydrolytic serinolysis, in which the side chain hydroxyl group of the serine supplies its oxygen atom to form the C-terminus of the beta chain, while the remainder of the serine residue undergoes an oxidative deamination to produce ammonia and the pyruvoyl prosthetic group on the alpha chain.

Its subcellular location is the cell membrane. It catalyses the reaction a 1,2-diacyl-sn-glycero-3-phospho-L-serine + H(+) = a 1,2-diacyl-sn-glycero-3-phosphoethanolamine + CO2. It functions in the pathway phospholipid metabolism; phosphatidylethanolamine biosynthesis; phosphatidylethanolamine from CDP-diacylglycerol: step 2/2. Catalyzes the formation of phosphatidylethanolamine (PtdEtn) from phosphatidylserine (PtdSer). This Parabacteroides distasonis (strain ATCC 8503 / DSM 20701 / CIP 104284 / JCM 5825 / NCTC 11152) protein is Phosphatidylserine decarboxylase proenzyme.